A 321-amino-acid polypeptide reads, in one-letter code: Beta-porphyranase B (321 aa).

A signal peptide spans 1 to 20 (MRKTVLYLSAASLFLSSYTL). Residues 31–319 (EHIKNLPEAP…WVRAYKLVPI (289 aa)) form the GH16 domain. Substrate is bound by residues Trp-72, Arg-76, Glu-173, Glu-178, and Glu-284. Glu-173 functions as the Nucleophile in the catalytic mechanism. Glu-178 (proton donor) is an active-site residue.

Belongs to the glycosyl hydrolase 16 family.

It catalyses the reaction Hydrolysis of beta-D-galactopyranose-(1-&gt;4)-alpha-L-galactopyranose-6-sulfate linkages in porphyran.. Functionally, cleaves the sulfated polysaccharide porphyran at the (1-&gt;4) linkages between beta-D-galactopyranose and alpha-L-galactopyranose-6-sulfate, forming mostly the disaccharide alpha-L-galactopyranose-6-sulfate-(1-&gt;3)-beta-D-galactose. Some longer oligosaccharides of even number of residues are also observed. Inactive on the non-sulfated agarose portion of the porphyran backbone. This is Beta-porphyranase B from Phocaeicola plebeius (strain DSM 17135 / JCM 12973 / CCUG 54634 / M2) (Bacteroides plebeius).